The chain runs to 246 residues: Neuromodulin (246 aa).

The disordered stretch occupies residues 1 to 246; the sequence is MLCCMRRTKQ…EESKADQENA (246 aa). Residues cysteine 3 and cysteine 4 are each lipidated (S-palmitoyl cysteine). Positions 9–33 are enriched in basic and acidic residues; sequence KQVEKNEDGDQKIEQDGIKPEDKAH. The IQ domain occupies 32–61; the sequence is AHKAATKIQASFRGHITRKKLKGEKKADAP. Low complexity-rich tracts occupy residues 87–99 and 125–157; these read ASAA…ADSA and SEQP…KAST. Positions 164–176 are enriched in basic and acidic residues; it reads KADEAQDKEEPKQ. Residues 177–203 show a composition bias toward low complexity; sequence ADVPAADTTATTTPAAEDATAKATAQP. Basic and acidic residues-rich tracts occupy residues 213 to 225 and 237 to 246; these read TEEK…ETKP and EESKADQENA.

The protein belongs to the neuromodulin family. Binds calmodulin with a greater affinity in the absence of Ca(2+) than in its presence. Post-translationally, palmitoylated. Palmitoylation is essential for plasma membrane association. Expressed in neurons.

Its subcellular location is the cell membrane. It localises to the cell projection. The protein localises to the growth cone membrane. The protein resides in the synapse. It is found in the filopodium membrane. Functionally, this protein is associated with nerve growth. It is a major component of the motile 'growth cones' that form the tips of elongating axons. Plays a role in axonal and dendritic filopodia induction. This is Neuromodulin (GAP43) from Gallus gallus (Chicken).